The following is a 783-amino-acid chain: Probable potassium transporter 2 (783 aa).

The Cytoplasmic segment spans residues 1–21 (MDAEAGVGGADQLPWRQHYRN). The helical transmembrane segment at 22-42 (LLLLAYQSFGVVYGDLSTSPL) threads the bilayer. Residues 43-61 (YVYKSTFSGRLRRYQDEQT) lie on the Extracellular side of the membrane. The chain crosses the membrane as a helical span at residues 62 to 82 (VFGVLSLIFWTFTLIPLLKYV). At 83–152 (TIVLSADDNG…FMEKHKNART (70 aa)) the chain is on the cytoplasmic side. Residues 153 to 173 (VLLLIVLCGASMMIGDGILTP) traverse the membrane as a helical segment. Residues 174 to 189 (AISVLSSMSGLKVRAT) lie on the Extracellular side of the membrane. The chain crosses the membrane as a helical span at residues 190–210 (GLHDRSVVLLSCIVLVGLFAL). At 211-217 (QHRGTQK) the chain is on the cytoplasmic side. The chain crosses the membrane as a helical span at residues 218–238 (VAFMFAPIVVIWLFCIGGIGL). The Extracellular portion of the chain corresponds to 239-268 (YNIIHWNPRIYQALSPYYIVKFFRTTGKDG). A helical transmembrane segment spans residues 269 to 289 (WIALGGILLSMTGCEAMFADL). The Cytoplasmic portion of the chain corresponds to 290-298 (GHFTSASVR). Residues 299–319 (LAFITIIYPCLILQYMGQAAF) traverse the membrane as a helical segment. Over 320–338 (LSKNILDMPTGFYDSIPGP) the chain is Extracellular. Residues 339–359 (IFWPVFVVATLAAVVGSQAVI) traverse the membrane as a helical segment. Residues 360-390 (SATFSIVKQCHSLGCFPRVKVVHTSRWIYGQ) lie on the Cytoplasmic side of the membrane. The helical transmembrane segment at 391-411 (IYIPEINWILMVLCVAVTVAF) threads the bilayer. The Extracellular portion of the chain corresponds to 412 to 422 (RDITLIGNAYG). Residues 423–443 (VACMTVMFVTTFLMALIMIFV) traverse the membrane as a helical segment. Residues 444–447 (WQKN) lie on the Cytoplasmic side of the membrane. Residues 448-468 (IIFALSFFLLFGSVEVVYLSS) form a helical membrane-spanning segment. Residues 469 to 475 (SLMKVTQ) lie on the Extracellular side of the membrane. The helical transmembrane segment at 476-496 (GGWVPLVLALIFMSVMYIWHY) threads the bilayer. Residues 497–783 (GTRKKYQYDL…LIEVGMAYQV (287 aa)) are Cytoplasmic-facing. The interval 662-691 (DLADSMTMRSTKSESLRSLQSSYEQESPNV) is disordered. Polar residues predominate over residues 677–691 (LRSLQSSYEQESPNV).

It belongs to the HAK/KUP transporter (TC 2.A.72.3) family.

The protein resides in the cell membrane. The enzyme catalyses K(+)(in) = K(+)(out). The catalysed reaction is Na(+)(in) = Na(+)(out). Its function is as follows. High-affinity potassium transporter. Can transport sodium under high sodium and low potassium concentrations in the extracellular environment. This is Probable potassium transporter 2 (HAK2) from Oryza sativa subsp. japonica (Rice).